The chain runs to 248 residues: DCN1-like protein 4 (248 aa).

The tract at residues 1-35 (MPRGKRRAADTISDNMDHGQPKRARTSYTSIPTQQ) is disordered. The segment covering 26–35 (TSYTSIPTQQ) has biased composition (polar residues). Residues 47-235 (FSQKRCMAWF…MLDEFVEWLR (189 aa)) enclose the DCUN1 domain.

It is found in the nucleus. Inhibits neddylation of cullin components of SCF-type E3 ubiquitin ligase complexes and thus regulates SCF-type complex activity. Essential for development. Function inhibits cell proliferation and cell growth. The sequence is that of DCN1-like protein 4 from Drosophila melanogaster (Fruit fly).